Reading from the N-terminus, the 388-residue chain is Pepsin A (388 aa).

Residues 1–15 (MKWLLLLGLVALSEC) form the signal peptide. The propeptide at 16 to 62 (IIYKVPLVRKKSLRRNLSEHGLLKDFLKKHNRNPASKYFPQTEAPTL) is activation peptide. The Peptidase A1 domain maps to 76–385 (YFGTIGIGTP…DRANNQVGLA (310 aa)). Aspartate 94 is an active-site residue. A disulfide bond links cysteine 107 and cysteine 112. Serine 130 carries the post-translational modification Phosphoserine. A disulfide bridge connects residues cysteine 268 and cysteine 272. Residue aspartate 277 is part of the active site. An intrachain disulfide couples cysteine 311 to cysteine 344.

This sequence belongs to the peptidase A1 family.

It localises to the secreted. It catalyses the reaction Preferential cleavage: hydrophobic, preferably aromatic, residues in P1 and P1' positions. Cleaves 1-Phe-|-Val-2, 4-Gln-|-His-5, 13-Glu-|-Ala-14, 14-Ala-|-Leu-15, 15-Leu-|-Tyr-16, 16-Tyr-|-Leu-17, 23-Gly-|-Phe-24, 24-Phe-|-Phe-25 and 25-Phe-|-Tyr-26 bonds in the B chain of insulin.. Shows particularly broad specificity; although bonds involving phenylalanine and leucine are preferred, many others are also cleaved to some extent. This chain is Pepsin A (PGA), found in Macaca mulatta (Rhesus macaque).